Consider the following 493-residue polypeptide: Aspartyl/glutamyl-tRNA(Asn/Gln) amidotransferase subunit B (493 aa).

This sequence belongs to the GatB/GatE family. GatB subfamily. As to quaternary structure, heterotrimer of A, B and C subunits.

The catalysed reaction is L-glutamyl-tRNA(Gln) + L-glutamine + ATP + H2O = L-glutaminyl-tRNA(Gln) + L-glutamate + ADP + phosphate + H(+). It catalyses the reaction L-aspartyl-tRNA(Asn) + L-glutamine + ATP + H2O = L-asparaginyl-tRNA(Asn) + L-glutamate + ADP + phosphate + 2 H(+). Its function is as follows. Allows the formation of correctly charged Asn-tRNA(Asn) or Gln-tRNA(Gln) through the transamidation of misacylated Asp-tRNA(Asn) or Glu-tRNA(Gln) in organisms which lack either or both of asparaginyl-tRNA or glutaminyl-tRNA synthetases. The reaction takes place in the presence of glutamine and ATP through an activated phospho-Asp-tRNA(Asn) or phospho-Glu-tRNA(Gln). The chain is Aspartyl/glutamyl-tRNA(Asn/Gln) amidotransferase subunit B from Aromatoleum aromaticum (strain DSM 19018 / LMG 30748 / EbN1) (Azoarcus sp. (strain EbN1)).